The chain runs to 326 residues: MKSFTIAALAALWAQEAAAHATFQDLWIDGVDYGSQCVRLPASNSPVTNVASDDIRCNVGTSRPTVKCPVKAGSTVTIEMHQQPGDRSCANEAIGGDHYGPVMVYMSKVDDAVTADGSSGWFKVFQDSWAKNPSGSTGDDDYWGTKDLNSCCGKMNVKIPEDIEPGDYLLRAEVIALHVAASSGGAQFYMSCYQLTVTGSGSATPSTVNFPGAYSASDPGILINIHAPMSTYVVPGPTVYAGGSTKSAGSSCSGCEATCTVGSGPSATLTQPTSTATATSAPGGGGSGCTAAKYQQCGGTGYTGCTTCASGSTCSAVSPPYYSQCL.

A signal peptide spans 1–19 (MKSFTIAALAALWAQEAAA). Cu(2+)-binding residues include His20 and His98. A disulfide bridge links Cys57 with Cys192. Residues His178 and Gln187 each contribute to the O2 site. Cu(2+) is bound at residue Tyr189. Low complexity predominate over residues 265–281 (PSATLTQPTSTATATSA). A disordered region spans residues 265-286 (PSATLTQPTSTATATSAPGGGG). A CBM1 domain is found at 289–326 (CTAAKYQQCGGTGYTGCTTCASGSTCSAVSPPYYSQCL).

The protein belongs to the polysaccharide monooxygenase AA9 family. Requires Cu(2+) as cofactor.

The protein resides in the secreted. It catalyses the reaction [(1-&gt;4)-beta-D-glucosyl]n+m + reduced acceptor + O2 = 4-dehydro-beta-D-glucosyl-[(1-&gt;4)-beta-D-glucosyl]n-1 + [(1-&gt;4)-beta-D-glucosyl]m + acceptor + H2O.. Functionally, lytic polysaccharide monooxygenase (LPMO) that depolymerizes crystalline and amorphous polysaccharides via the oxidation of scissile alpha- or beta-(1-4)-glycosidic bonds, yielding C1 and C4 oxidation products. Catalysis by LPMOs requires the reduction of the active-site copper from Cu(II) to Cu(I) by a reducing agent and H(2)O(2) or O(2) as a cosubstrate. Shows no activity on wheat arabinoxylan, konjac glucomannan, acetylated spruce galactoglucomannan, or cellopentaose. This chain is AA9 family lytic polysaccharide monooxygenase B, found in Thermothielavioides terrestris (strain ATCC 38088 / NRRL 8126) (Thielavia terrestris).